Consider the following 265-residue polypeptide: S-acyl fatty acid synthase thioesterase, medium chain (265 aa).

Residue methionine 1 is modified to N-acetylmethionine. Residues serine 101 and histidine 237 contribute to the active site.

Belongs to the thioesterase family. In terms of assembly, interacts (via C-terminus) with FASN. In terms of tissue distribution, detected both in lactating and non-lactating breast epithelium (at protein level). Isoform 2 is up-regulated in bone marrow-derived mononuclear cells of rheumatoid arthritis patients.

It is found in the cytoplasm. It localises to the cytosol. The enzyme catalyses (9Z)-octadecenoyl-[ACP] + H2O = (9Z)-octadecenoate + holo-[ACP] + H(+). The catalysed reaction is decanoyl-CoA + H2O = decanoate + CoA + H(+). It catalyses the reaction dodecanoyl-CoA + H2O = dodecanoate + CoA + H(+). It carries out the reaction tetradecanoyl-CoA + H2O = tetradecanoate + CoA + H(+). The enzyme catalyses hexadecanoyl-CoA + H2O = hexadecanoate + CoA + H(+). Contributes to the release of free fatty acids from fatty acid synthase (FASN). Has broad substrate specificity, giving rise to a range of free fatty acids with chain lengths between 10 and 16 carbon atoms (C10 - C16). In Homo sapiens (Human), this protein is S-acyl fatty acid synthase thioesterase, medium chain.